The primary structure comprises 215 residues: Cytochrome b6 (215 aa).

Residues 32–52 (IFYCLGGITFTCFLVQVATGF) form a helical membrane-spanning segment. Cysteine 35 is a heme c binding site. Positions 86 and 100 each coordinate heme b. 3 helical membrane-spanning segments follow: residues 90–110 (ASMM…TGGF), 116–136 (STWI…VTGY), and 186–206 (LHTF…FLMI). Residues histidine 187 and histidine 202 each contribute to the heme b site.

It belongs to the cytochrome b family. PetB subfamily. As to quaternary structure, the 4 large subunits of the cytochrome b6-f complex are cytochrome b6, subunit IV (17 kDa polypeptide, PetD), cytochrome f and the Rieske protein, while the 4 small subunits are PetG, PetL, PetM and PetN. The complex functions as a dimer. The cofactor is heme b. Heme c is required as a cofactor.

Its subcellular location is the plastid. It localises to the chloroplast thylakoid membrane. Its function is as follows. Component of the cytochrome b6-f complex, which mediates electron transfer between photosystem II (PSII) and photosystem I (PSI), cyclic electron flow around PSI, and state transitions. The sequence is that of Cytochrome b6 from Tetradesmus obliquus (Green alga).